The primary structure comprises 361 residues: UDP-N-acetylglucosamine--N-acetylmuramyl-(pentapeptide) pyrophosphoryl-undecaprenol N-acetylglucosamine transferase (361 aa).

UDP-N-acetyl-alpha-D-glucosamine contacts are provided by residues 11–13 (TGG), Asn-124, Arg-164, Ser-192, and Gln-295.

It belongs to the glycosyltransferase 28 family. MurG subfamily.

It is found in the cell membrane. It catalyses the reaction di-trans,octa-cis-undecaprenyl diphospho-N-acetyl-alpha-D-muramoyl-L-alanyl-D-glutamyl-meso-2,6-diaminopimeloyl-D-alanyl-D-alanine + UDP-N-acetyl-alpha-D-glucosamine = di-trans,octa-cis-undecaprenyl diphospho-[N-acetyl-alpha-D-glucosaminyl-(1-&gt;4)]-N-acetyl-alpha-D-muramoyl-L-alanyl-D-glutamyl-meso-2,6-diaminopimeloyl-D-alanyl-D-alanine + UDP + H(+). It participates in cell wall biogenesis; peptidoglycan biosynthesis. Its function is as follows. Cell wall formation. Catalyzes the transfer of a GlcNAc subunit on undecaprenyl-pyrophosphoryl-MurNAc-pentapeptide (lipid intermediate I) to form undecaprenyl-pyrophosphoryl-MurNAc-(pentapeptide)GlcNAc (lipid intermediate II). This Deinococcus geothermalis (strain DSM 11300 / CIP 105573 / AG-3a) protein is UDP-N-acetylglucosamine--N-acetylmuramyl-(pentapeptide) pyrophosphoryl-undecaprenol N-acetylglucosamine transferase.